The primary structure comprises 355 residues: Arginine kinase (355 aa).

A Phosphagen kinase N-terminal domain is found at 6–90 (TLEKLEAGFS…FDPIIEDYHN (85 aa)). 63-67 (GVGIY) provides a ligand contact to substrate. In terms of domain architecture, Phosphagen kinase C-terminal spans 118-355 (FVVSTRVRCG…AELIKIEKSL (238 aa)). Residues 121–125 (STRVR) and His184 contribute to the ATP site. Glu224 provides a ligand contact to substrate. Arg228 lines the ATP pocket. Cys270 contributes to the substrate binding site. ATP contacts are provided by residues 279-283 (RASVH) and 308-313 (RGTRGE). Glu313 lines the substrate pocket.

The protein belongs to the ATP:guanido phosphotransferase family.

It catalyses the reaction L-arginine + ATP = N(omega)-phospho-L-arginine + ADP + H(+). The polypeptide is Arginine kinase (ARGK) (Plodia interpunctella (Indianmeal moth)).